The following is a 143-amino-acid chain: Large-conductance mechanosensitive channel (143 aa).

The next 3 membrane-spanning stretches (helical) occupy residues 10-30 (FAIKGNMMDLAIGVIIGGAFG), 40-60 (IIMPLITVITGGGVDFSQKFI), and 86-106 (GNFLTILINFLILAWVVFLMV).

It belongs to the MscL family. In terms of assembly, homopentamer.

The protein localises to the cell inner membrane. Channel that opens in response to stretch forces in the membrane lipid bilayer. May participate in the regulation of osmotic pressure changes within the cell. The polypeptide is Large-conductance mechanosensitive channel (Acinetobacter baumannii (strain ATCC 17978 / DSM 105126 / CIP 53.77 / LMG 1025 / NCDC KC755 / 5377)).